Reading from the N-terminus, the 1680-residue chain is SWI/SNF chromatin-remodeling complex subunit snf22 (1680 aa).

4 disordered regions span residues 61–135 (QQMR…SQAS), 203–258 (NNSF…HSFS), 274–300 (RRGSIPVNPSTFSASSPPSGSMLASPY), and 367–427 (YVYR…VPPT). A compositionally biased stretch (polar residues) spans 62–91 (QMRNQSSEFPDAENTNLRKQQDTLPTTGFN). 2 stretches are compositionally biased toward low complexity: residues 118–127 (GNGNVGLNNP) and 222–233 (SSLPHSFASPSS). A compositionally biased stretch (polar residues) spans 234-245 (TFEQPHTVQSRA). Composition is skewed to low complexity over residues 247-258 (SVDTTSSSHSFS), 282-299 (PSTFSASSPPSGSMLASP), and 374-392 (PPSATSFQPSSSRSPSVDP). Residues 406–419 (PSPSASALKTQSHV) are compositionally biased toward polar residues. Positions 429–465 (KLNHAQLAMLKSQIVAYNCLNSPNGQVPPAVQQAIFG) constitute a QLQ domain. The segment covering 477-489 (SMPFQQNVPQMSS) has biased composition (polar residues). The disordered stretch occupies residues 477–499 (SMPFQQNVPQMSSVKKDTPTRDA). A compositionally biased stretch (basic and acidic residues) spans 490–499 (VKKDTPTRDA). Positions 704 to 776 (QKTEHAMRQK…ARQRLQALRA (73 aa)) constitute an HSA domain. Over residues 817-832 (SNIHSGNTSGKGSNSA) the composition is skewed to polar residues. The disordered stretch occupies residues 817 to 836 (SNIHSGNTSGKGSNSAELEA). Residues 881-1046 (LSLYNNNLNG…WALLNFVLPK (166 aa)) form the Helicase ATP-binding domain. Residue 894 to 901 (DEMGLGKT) coordinates ATP. The short motif at 996–999 (DEGH) is the DEGH box element. Residues 1191-1354 (LLDRILPKLF…STPEEREAFL (164 aa)) enclose the Helicase C-terminal domain. Residues 1466–1511 (TVDDPSSTLMPRKRGRPRKKTNSGSSLSTPLSQESSLARSGRKNTP) form a disordered region. A compositionally biased stretch (basic residues) spans 1476-1486 (PRKRGRPRKKT). Low complexity predominate over residues 1488–1502 (SGSSLSTPLSQESSL). The Bromo domain maps to 1513–1623 (YKQKALRRYC…KTLKEVIEDL (111 aa)).

The protein belongs to the SNF2/RAD54 helicase family. Component of the SWI/SNF global transcription activator complex composed of at least arp9, arp42, snf5, snf22, snf30, sbf59, sol1, ssr1, ssr2, ssr3, ssr4 and tfg3.

Its subcellular location is the nucleus. Helicase. Component of the SWI/SNF complex, an ATP-dependent chromatin remodeling complex, required for the positive and negative regulation of gene expression of a large number of genes. It changes chromatin structure by altering DNA-histone contacts within a nucleosome, leading eventually to a change in nucleosome position, thus facilitating or repressing binding of gene-specific transcription factors. The polypeptide is SWI/SNF chromatin-remodeling complex subunit snf22 (snf22) (Schizosaccharomyces pombe (strain 972 / ATCC 24843) (Fission yeast)).